The chain runs to 205 residues: N-(5'-phosphoribosyl)anthranilate isomerase (205 aa).

Belongs to the TrpF family.

The enzyme catalyses N-(5-phospho-beta-D-ribosyl)anthranilate = 1-(2-carboxyphenylamino)-1-deoxy-D-ribulose 5-phosphate. Its pathway is amino-acid biosynthesis; L-tryptophan biosynthesis; L-tryptophan from chorismate: step 3/5. This is N-(5'-phosphoribosyl)anthranilate isomerase from Trichlorobacter lovleyi (strain ATCC BAA-1151 / DSM 17278 / SZ) (Geobacter lovleyi).